A 366-amino-acid polypeptide reads, in one-letter code: Ribosomal RNA large subunit methyltransferase M (366 aa).

Residues serine 188, 221–224 (CPGG), aspartate 240, aspartate 260, and aspartate 277 each bind S-adenosyl-L-methionine. Residue lysine 306 is the Proton acceptor of the active site.

Belongs to the class I-like SAM-binding methyltransferase superfamily. RNA methyltransferase RlmE family. RlmM subfamily. In terms of assembly, monomer.

The protein resides in the cytoplasm. It carries out the reaction cytidine(2498) in 23S rRNA + S-adenosyl-L-methionine = 2'-O-methylcytidine(2498) in 23S rRNA + S-adenosyl-L-homocysteine + H(+). In terms of biological role, catalyzes the 2'-O-methylation at nucleotide C2498 in 23S rRNA. The protein is Ribosomal RNA large subunit methyltransferase M of Salmonella dublin (strain CT_02021853).